Here is a 64-residue protein sequence, read N- to C-terminus: Alpha-conotoxin SI (64 aa).

An N-terminal signal peptide occupies residues 1 to 21; the sequence is MGMRMMFTVFLLVVLATTVVS. Positions 22–49 are excised as a propeptide; sequence FPSDRASDGRDDEAKDERSDMHESDRKE. Residues 23–47 form a disordered region; it reads PSDRASDGRDDEAKDERSDMHESDR. Positions 26–47 are enriched in basic and acidic residues; that stretch reads RASDGRDDEAKDERSDMHESDR. Intrachain disulfides connect Cys51-Cys56 and Cys52-Cys62. The residue at position 62 (Cys62) is a Cysteine amide.

It belongs to the conotoxin A superfamily. As to expression, expressed by the venom duct.

The protein localises to the secreted. In terms of biological role, alpha-conotoxins act on postsynaptic membranes, they bind to the nicotinic acetylcholine receptors (nAChR) and thus inhibit them. Is active on muscle nAChR (IC(50)=113 nM on adult subtype (alpha-1-beta-1-gamma-delta/CHRNA1-CHRNB1-CHRNG-CHRND) and IC(50)=142 nM on fetal subtype (alpha-1-beta-1-delta-epsilon/CHRNA1-CHRNB1-CHRND-CHRNE)). On mice muscle receptors, its higher affinity site is the alpha/delta nAChR subunit interface. On Torpedo receptors, it does not distinguish between alpha/delta and alpha/gamma acetylcholine-binding sites. In vivo, causes paralysis followed by death when injected into goldfish. In contrast, has no effect on mice, when similar doses are intraperitoneally or intracerebrally injected. The protein is Alpha-conotoxin SI of Conus striatus (Striated cone).